Consider the following 327-residue polypeptide: Ferrochelatase (327 aa).

Fe cation-binding residues include H196 and E277.

Belongs to the ferrochelatase family.

It localises to the cytoplasm. The enzyme catalyses heme b + 2 H(+) = protoporphyrin IX + Fe(2+). Its pathway is porphyrin-containing compound metabolism; protoheme biosynthesis; protoheme from protoporphyrin-IX: step 1/1. Its function is as follows. Catalyzes the ferrous insertion into protoporphyrin IX. This is Ferrochelatase from Gloeobacter violaceus (strain ATCC 29082 / PCC 7421).